Consider the following 28-residue polypeptide: Grammistin Gs A (28 aa).

This sequence belongs to the grammistin family. Group 3 subfamily. In terms of assembly, exists as aggregates of 3-4 molecules. Expressed by the skin glands.

It is found in the secreted. Functionally, thanks to its amphiphilic alpha-helice(s), it may integrate into membrane phospholipids, leading to lysis of the membrane. Has no substantial hemolytic activity. Has antibacterial activity with a broad spectrum against various species of bacteria including both Gram-positive and Gram-negative groups. The chain is Grammistin Gs A from Grammistes sexlineatus (Goldenstriped soapfish).